Reading from the N-terminus, the 440-residue chain is Streptokinase G (440 aa).

A signal peptide spans 1 to 26 (MKNYLSFGMFALLFALTFGTVNSVQA).

Its function is as follows. This protein is not a protease, but it activates plasminogen by complexing with it. As a potential virulence factor, it is thought to prevent the formation of effective fibrin barriers around the site of infection, thereby contributing to the invasiveness of the cells. The sequence is that of Streptokinase G (skg) from Streptococcus sp. (strain 19909).